Here is a 338-residue protein sequence, read N- to C-terminus: Formamidase (338 aa).

Residues 15–257 (VVIGLAQLAL…DEIVCCELRP (243 aa)) form the CN hydrolase domain. The Proton acceptor role is filled by Glu61. Lys130 functions as the Proton donor in the catalytic mechanism. The Nucleophile role is filled by Cys163.

The protein belongs to the carbon-nitrogen hydrolase superfamily. Aliphatic amidase family.

The enzyme catalyses formamide + H2O = formate + NH4(+). Functionally, is an aliphatic amidase with a restricted substrate specificity, as it only hydrolyzes formamide. The polypeptide is Formamidase (Pseudomonas syringae pv. syringae (strain B728a)).